Reading from the N-terminus, the 275-residue chain is NH(3)-dependent NAD(+) synthetase (275 aa).

G46 to S53 contributes to the ATP binding site. D52 serves as a coordination point for Mg(2+). R140 serves as a coordination point for deamido-NAD(+). ATP is bound at residue T160. E165 contacts Mg(2+). The deamido-NAD(+) site is built by K173 and D180. Residues K189 and T211 each contribute to the ATP site. H260–K261 is a binding site for deamido-NAD(+).

Belongs to the NAD synthetase family. Homodimer.

The catalysed reaction is deamido-NAD(+) + NH4(+) + ATP = AMP + diphosphate + NAD(+) + H(+). The protein operates within cofactor biosynthesis; NAD(+) biosynthesis; NAD(+) from deamido-NAD(+) (ammonia route): step 1/1. Catalyzes the ATP-dependent amidation of deamido-NAD to form NAD. Uses ammonia as a nitrogen source. The chain is NH(3)-dependent NAD(+) synthetase from Escherichia coli O139:H28 (strain E24377A / ETEC).